The following is a 565-amino-acid chain: uncharacterized protein (565 aa).

The next 10 membrane-spanning stretches (helical) occupy residues I28 to A48, A73 to L93, V109 to W129, L169 to I189, I262 to L282, L315 to S335, S364 to I384, V393 to I413, A461 to L481, and T526 to V546.

The protein belongs to the TrkH potassium transport family.

It is found in the cell membrane. This is an uncharacterized protein from Mycoplasma pneumoniae (strain ATCC 29342 / M129 / Subtype 1) (Mycoplasmoides pneumoniae).